The sequence spans 338 residues: MDINSTSPLNASPQPDSPPPANASAFAHQLSGFQYSPPHAADSLLPQVEADSPYLDTRHPYSQYLDSAYPYPSPCEWQHDLYTRTRERSPHPSEQRPHARVLQGAPEHDQDQHLEAAGPREGSWQVGPSRSGPSQAGLSPSATPLNPSPPPHATDLETKHPYSQYLDWANPSLLDWQQDLHTRATASPAPLTAERGRSPQPSEQQPHARALQVPEYDQDLIWQRVDAAGPQAGPWQVGPSHSGPSQARPSHAWPSSSAGAEPAELSDFVMDSGVRAWDHWFLAPHMASEDQMSMLRATGLMPTAEVPTTTFLMMGMRHVAEFRGEGVIRIRPSVDFDI.

Residues 1-14 (MDINSTSPLNASPQ) are compositionally biased toward polar residues. 4 disordered regions span residues 1-48 (MDIN…LPQV), 85-158 (TRER…DLET), 187-209 (SPAP…PHAR), and 230-259 (PQAG…SSAG). The span at 85-97 (TRERSPHPSEQRP) shows a compositional bias: basic and acidic residues. Positions 126-138 (VGPSRSGPSQAGL) are enriched in polar residues. The segment covering 242–258 (SGPSQARPSHAWPSSSA) has biased composition (polar residues).

The protein localises to the secreted. Its function is as follows. Putative symbiotic effector that modulates nodulation in legumes. When delivered into the plant cell, modulates the activity of signal transduction pathways that culminate in activation of PR proteins. The sequence is that of Nodulation outer protein L (nopL) from Sinorhizobium fredii (strain NBRC 101917 / NGR234).